A 433-amino-acid chain; its full sequence is uncharacterized protein (433 aa).

The TRAM domain occupies Met-1–Glu-59. [4Fe-4S] cluster-binding residues include Cys-72, Cys-80, Cys-83, and Cys-168. Positions 262, 291, 315, and 359 each coordinate S-adenosyl-L-methionine. Catalysis depends on Cys-386, which acts as the Nucleophile.

The protein belongs to the class I-like SAM-binding methyltransferase superfamily. RNA M5U methyltransferase family.

This is an uncharacterized protein from Streptomyces avermitilis (strain ATCC 31267 / DSM 46492 / JCM 5070 / NBRC 14893 / NCIMB 12804 / NRRL 8165 / MA-4680).